Reading from the N-terminus, the 465-residue chain is Argininosuccinate lyase (465 aa).

The protein belongs to the lyase 1 family. Argininosuccinate lyase subfamily.

The protein resides in the cytoplasm. The catalysed reaction is 2-(N(omega)-L-arginino)succinate = fumarate + L-arginine. It participates in amino-acid biosynthesis; L-arginine biosynthesis; L-arginine from L-ornithine and carbamoyl phosphate: step 3/3. This chain is Argininosuccinate lyase, found in Methylococcus capsulatus (strain ATCC 33009 / NCIMB 11132 / Bath).